Reading from the N-terminus, the 372-residue chain is uncharacterized protein (372 aa).

The disordered stretch occupies residues 49-72 (FSHKGGGKGGGSGAGSNDGGCSGE). The segment covering 55 to 70 (GKGGGSGAGSNDGGCS) has biased composition (gly residues).

This is an uncharacterized protein from Halorubrum lacusprofundi (strain ATCC 49239 / DSM 5036 / JCM 8891 / ACAM 34).